A 235-amino-acid polypeptide reads, in one-letter code: Phosphate-specific transport system accessory protein PhoU homolog 2 (235 aa).

It belongs to the PhoU family. As to quaternary structure, homodimer.

It is found in the cytoplasm. Plays a role in the regulation of phosphate uptake. The chain is Phosphate-specific transport system accessory protein PhoU homolog 2 (phoU2) from Thermotoga maritima (strain ATCC 43589 / DSM 3109 / JCM 10099 / NBRC 100826 / MSB8).